The sequence spans 208 residues: Thiamine-phosphate synthase (208 aa).

Residues 37-39 (QVR) and Asn70 each bind 4-amino-2-methyl-5-(diphosphooxymethyl)pyrimidine. Residues Asp71 and Asp90 each contribute to the Mg(2+) site. Thr109 is a 4-amino-2-methyl-5-(diphosphooxymethyl)pyrimidine binding site. 135–137 (TTS) is a binding site for 2-[(2R,5Z)-2-carboxy-4-methylthiazol-5(2H)-ylidene]ethyl phosphate. Lys138 is a 4-amino-2-methyl-5-(diphosphooxymethyl)pyrimidine binding site. Ala166 is a 2-[(2R,5Z)-2-carboxy-4-methylthiazol-5(2H)-ylidene]ethyl phosphate binding site.

The protein belongs to the thiamine-phosphate synthase family. Requires Mg(2+) as cofactor.

It carries out the reaction 2-[(2R,5Z)-2-carboxy-4-methylthiazol-5(2H)-ylidene]ethyl phosphate + 4-amino-2-methyl-5-(diphosphooxymethyl)pyrimidine + 2 H(+) = thiamine phosphate + CO2 + diphosphate. The enzyme catalyses 2-(2-carboxy-4-methylthiazol-5-yl)ethyl phosphate + 4-amino-2-methyl-5-(diphosphooxymethyl)pyrimidine + 2 H(+) = thiamine phosphate + CO2 + diphosphate. The catalysed reaction is 4-methyl-5-(2-phosphooxyethyl)-thiazole + 4-amino-2-methyl-5-(diphosphooxymethyl)pyrimidine + H(+) = thiamine phosphate + diphosphate. Its pathway is cofactor biosynthesis; thiamine diphosphate biosynthesis; thiamine phosphate from 4-amino-2-methyl-5-diphosphomethylpyrimidine and 4-methyl-5-(2-phosphoethyl)-thiazole: step 1/1. Condenses 4-methyl-5-(beta-hydroxyethyl)thiazole monophosphate (THZ-P) and 2-methyl-4-amino-5-hydroxymethyl pyrimidine pyrophosphate (HMP-PP) to form thiamine monophosphate (TMP). In Salinispora tropica (strain ATCC BAA-916 / DSM 44818 / JCM 13857 / NBRC 105044 / CNB-440), this protein is Thiamine-phosphate synthase.